Reading from the N-terminus, the 84-residue chain is Small ribosomal subunit protein uS17 (84 aa).

The protein belongs to the universal ribosomal protein uS17 family. In terms of assembly, part of the 30S ribosomal subunit.

One of the primary rRNA binding proteins, it binds specifically to the 5'-end of 16S ribosomal RNA. The sequence is that of Small ribosomal subunit protein uS17 from Borreliella afzelii (strain PKo) (Borrelia afzelii).